Here is a 198-residue protein sequence, read N- to C-terminus: Probable molybdenum cofactor guanylyltransferase (198 aa).

Residues 11-13 (LAG), K23, D71, and D102 contribute to the GTP site. Residue D102 coordinates Mg(2+).

This sequence belongs to the MobA family. Mg(2+) serves as cofactor.

The protein localises to the cytoplasm. The enzyme catalyses Mo-molybdopterin + GTP + H(+) = Mo-molybdopterin guanine dinucleotide + diphosphate. In terms of biological role, transfers a GMP moiety from GTP to Mo-molybdopterin (Mo-MPT) cofactor (Moco or molybdenum cofactor) to form Mo-molybdopterin guanine dinucleotide (Mo-MGD) cofactor. The chain is Probable molybdenum cofactor guanylyltransferase from Halalkalibacterium halodurans (strain ATCC BAA-125 / DSM 18197 / FERM 7344 / JCM 9153 / C-125) (Bacillus halodurans).